Consider the following 530-residue polypeptide: Hyccin 2 (530 aa).

Residues Thr-30 and Thr-306 each carry the phosphothreonine modification. Residues Ser-321 and Ser-341 each carry the phosphoserine modification. Residues 328–404 (RREGAEGLNG…SNESPRDSVV (77 aa)) form a disordered region. Over residues 353 to 373 (SGASLSSQPHGTKPPSSSQRG) the composition is skewed to polar residues. 4 positions are modified to phosphoserine: Ser-430, Ser-442, Ser-444, and Ser-491. The disordered stretch occupies residues 502-530 (EGKELLSPGAPLTKQSRSPSFNMQLISQV). Positions 514–530 (TKQSRSPSFNMQLISQV) are enriched in polar residues.

It belongs to the Hyccin family. As to quaternary structure, component of a phosphatidylinositol 4-kinase (PI4K) complex, composed of PI4KA, EFR3 (EFR3A or EFR3B), TTC7 (TTC7A or TTC7B) and HYCC (HYCC1 or HYCC2). In terms of tissue distribution, expressed in the central nervous system. Expressed at much lower level in oligodendrocytes than in neurons.

It is found in the cytoplasm. The protein localises to the cytosol. Its subcellular location is the cell membrane. In terms of biological role, component of a complex required to localize phosphatidylinositol 4-kinase (PI4K) to the plasma membrane. This Mus musculus (Mouse) protein is Hyccin 2 (Hycc2).